A 590-amino-acid chain; its full sequence is Arginine--tRNA ligase (590 aa).

The short motif at 130-140 (ANPTGPMHVGH) is the 'HIGH' region element.

It belongs to the class-I aminoacyl-tRNA synthetase family. Monomer.

Its subcellular location is the cytoplasm. It catalyses the reaction tRNA(Arg) + L-arginine + ATP = L-arginyl-tRNA(Arg) + AMP + diphosphate. The protein is Arginine--tRNA ligase of Methylobacterium nodulans (strain LMG 21967 / CNCM I-2342 / ORS 2060).